Here is a 341-residue protein sequence, read N- to C-terminus: Methionine import ATP-binding protein MetN 2 (341 aa).

The region spanning 2–241 (IELKEVVKEY…PQHTVTKRFV (240 aa)) is the ABC transporter domain. 38–45 (GFSGAGKS) contributes to the ATP binding site.

Belongs to the ABC transporter superfamily. Methionine importer (TC 3.A.1.24) family. As to quaternary structure, the complex is composed of two ATP-binding proteins (MetN), two transmembrane proteins (MetI) and a solute-binding protein (MetQ).

The protein resides in the cell membrane. It carries out the reaction L-methionine(out) + ATP + H2O = L-methionine(in) + ADP + phosphate + H(+). It catalyses the reaction D-methionine(out) + ATP + H2O = D-methionine(in) + ADP + phosphate + H(+). Part of the ABC transporter complex MetNIQ involved in methionine import. Responsible for energy coupling to the transport system. This is Methionine import ATP-binding protein MetN 2 from Staphylococcus aureus (strain N315).